Consider the following 431-residue polypeptide: Glutamyl-tRNA(Gln) amidotransferase subunit A (431 aa).

Residues Lys55 and Ser130 each act as charge relay system in the active site. Catalysis depends on Ser154, which acts as the Acyl-ester intermediate.

Belongs to the amidase family. GatA subfamily. Heterotrimer of A, B and C subunits.

The catalysed reaction is L-glutamyl-tRNA(Gln) + L-glutamine + ATP + H2O = L-glutaminyl-tRNA(Gln) + L-glutamate + ADP + phosphate + H(+). In terms of biological role, allows the formation of correctly charged Gln-tRNA(Gln) through the transamidation of misacylated Glu-tRNA(Gln) in organisms which lack glutaminyl-tRNA synthetase. The reaction takes place in the presence of glutamine and ATP through an activated gamma-phospho-Glu-tRNA(Gln). This chain is Glutamyl-tRNA(Gln) amidotransferase subunit A, found in Methanococcus maripaludis (strain C7 / ATCC BAA-1331).